The chain runs to 426 residues: Adenylosuccinate synthetase 2 (426 aa).

GTP contacts are provided by residues 12–18 (GDEGKGK) and 40–42 (GHT). Residue D13 is the Proton acceptor of the active site. 2 residues coordinate Mg(2+): D13 and G40. Residues 13–16 (DEGK), 38–41 (NAGH), R147, N223, T238, and R302 contribute to the IMP site. Residue H41 is the Proton donor of the active site. Residue 298–304 (TNTGRRR) coordinates substrate. GTP contacts are provided by residues R304, 330–332 (KLD), and 412–414 (GVG).

The protein belongs to the adenylosuccinate synthetase family. In terms of assembly, homodimer. Mg(2+) serves as cofactor.

The protein resides in the cytoplasm. It catalyses the reaction IMP + L-aspartate + GTP = N(6)-(1,2-dicarboxyethyl)-AMP + GDP + phosphate + 2 H(+). It functions in the pathway purine metabolism; AMP biosynthesis via de novo pathway; AMP from IMP: step 1/2. Plays an important role in the de novo pathway and in the salvage pathway of purine nucleotide biosynthesis. Catalyzes the first committed step in the biosynthesis of AMP from IMP. The polypeptide is Adenylosuccinate synthetase 2 (Laccaria bicolor (strain S238N-H82 / ATCC MYA-4686) (Bicoloured deceiver)).